We begin with the raw amino-acid sequence, 204 residues long: Urease accessory protein UreG (204 aa).

Residue 12–19 (GPVGSGKT) participates in GTP binding.

This sequence belongs to the SIMIBI class G3E GTPase family. UreG subfamily. Homodimer. UreD, UreF and UreG form a complex that acts as a GTP-hydrolysis-dependent molecular chaperone, activating the urease apoprotein by helping to assemble the nickel containing metallocenter of UreC. The UreE protein probably delivers the nickel.

The protein localises to the cytoplasm. Facilitates the functional incorporation of the urease nickel metallocenter. This process requires GTP hydrolysis, probably effectuated by UreG. In Pseudomonas aeruginosa (strain LESB58), this protein is Urease accessory protein UreG.